The primary structure comprises 31 residues: Ice-structuring glycoprotein 3 (31 aa).

O-linked (GalNAc...) threonine glycans are attached at residues Thr-3, Thr-6, Thr-9, Thr-12, Thr-15, Thr-18, Thr-21, Thr-24, Thr-27, and Thr-30.

In terms of processing, O-linked glycans consist of Gal-GalNAc disaccharides. The three proteins may differ only in the number of repeating units of -Ala-Ala-Thr-.

The protein resides in the secreted. Its function is as follows. Antifreeze proteins lower the blood freezing point. This fish lives in antarctic waters where it experiences water temperatures near -1.9 degrees Celsius. Its blood has a freezing point of about -2.0 degrees Celsius, and 30% of the freezing-point depression is due mainly to the 3 major high molecular weight glycoproteins in the plasma. This chain is Ice-structuring glycoprotein 3, found in Pagothenia borchgrevinki (Bald rockcod).